Consider the following 254-residue polypeptide: NAD kinase (254 aa).

Residue Asp-44 is the Proton acceptor of the active site. NAD(+)-binding positions include 44–45 (DG), 114–115 (NE), Asp-144, Ala-152, 155–160 (TAYNYS), and Ala-179.

It belongs to the NAD kinase family. The cofactor is a divalent metal cation.

Its subcellular location is the cytoplasm. It catalyses the reaction NAD(+) + ATP = ADP + NADP(+) + H(+). Functionally, involved in the regulation of the intracellular balance of NAD and NADP, and is a key enzyme in the biosynthesis of NADP. Catalyzes specifically the phosphorylation on 2'-hydroxyl of the adenosine moiety of NAD to yield NADP. In Cereibacter sphaeroides (strain ATCC 17029 / ATH 2.4.9) (Rhodobacter sphaeroides), this protein is NAD kinase.